A 431-amino-acid polypeptide reads, in one-letter code: Serine hydroxymethyltransferase 2 (431 aa).

Residues L131 and 135–137 each bind (6S)-5,6,7,8-tetrahydrofolate; that span reads GHL. An N6-(pyridoxal phosphate)lysine modification is found at K240. E256 is a (6S)-5,6,7,8-tetrahydrofolate binding site.

The protein belongs to the SHMT family. Homodimer. It depends on pyridoxal 5'-phosphate as a cofactor.

The protein resides in the cytoplasm. The catalysed reaction is (6R)-5,10-methylene-5,6,7,8-tetrahydrofolate + glycine + H2O = (6S)-5,6,7,8-tetrahydrofolate + L-serine. It participates in one-carbon metabolism; tetrahydrofolate interconversion. It functions in the pathway amino-acid biosynthesis; glycine biosynthesis; glycine from L-serine: step 1/1. Its function is as follows. Catalyzes the reversible interconversion of serine and glycine with tetrahydrofolate (THF) serving as the one-carbon carrier. This reaction serves as the major source of one-carbon groups required for the biosynthesis of purines, thymidylate, methionine, and other important biomolecules. Also exhibits THF-independent aldolase activity toward beta-hydroxyamino acids, producing glycine and aldehydes, via a retro-aldol mechanism. The polypeptide is Serine hydroxymethyltransferase 2 (Vibrio vulnificus (strain YJ016)).